A 300-amino-acid polypeptide reads, in one-letter code: MTDTAPTPEKMPQKIVLVTGPSGAGRTTAIRALEDLGFEAIDNMPISLVPRLLDGPPLARPLALGLDARTRDFSVTAVADLLHLLAEDPRADAQLLFLDASPRVLTRRFSETRRRHPLAPLESPMDGIARETDLLAPIRARADVVIDTSELSPHDLRAEMLRWFGDRDSLRLAITVQSFSYKRGVPQGTDMVFDVRFLRNPYWEDTLRRLDGRDARVQDYVSADPRFDSFFDNIASLVRLLLPAYREEGKSHLSIGFGCTGGQHRSVTVAEKLSAALVAEGWQVSNRHLELSRRSIGAQS.

Residue 20 to 27 (GPSGAGRT) participates in ATP binding. 67–70 (DART) is a GTP binding site.

This sequence belongs to the RapZ-like family.

In terms of biological role, displays ATPase and GTPase activities. The protein is Nucleotide-binding protein Dshi_0209 of Dinoroseobacter shibae (strain DSM 16493 / NCIMB 14021 / DFL 12).